The primary structure comprises 426 residues: Glutamate-1-semialdehyde 2,1-aminomutase (426 aa).

At Lys-265 the chain carries N6-(pyridoxal phosphate)lysine.

The protein belongs to the class-III pyridoxal-phosphate-dependent aminotransferase family. HemL subfamily. Homodimer. Pyridoxal 5'-phosphate is required as a cofactor.

The protein resides in the cytoplasm. It catalyses the reaction (S)-4-amino-5-oxopentanoate = 5-aminolevulinate. It functions in the pathway porphyrin-containing compound metabolism; protoporphyrin-IX biosynthesis; 5-aminolevulinate from L-glutamyl-tRNA(Glu): step 2/2. The polypeptide is Glutamate-1-semialdehyde 2,1-aminomutase (Salmonella schwarzengrund (strain CVM19633)).